The sequence spans 693 residues: MKGRLLDAVPLSSLTGVGAALSNKLAKINLHTVQDLLLHLPLRYEDRTHLYPIGELLPGVYATVEGEVLNCNISFGGRRMMTCQISDGSGILTMRFFNFSAAMKNSLAAGRRVLAYGEAKRGKYGAEMIHPEYRVQGDLSTPELQETLTPVYPTTEGVKQATLRKLTDQALDLLDTCAIEELLPPELSQGMMTLPEALRTLHRPPPTLQLSDLETGQHPAQRRLILEELLAHNLSMLALRAGAQRFHAQPLSANDTLKNKLLAALPFKPTGAQARVVAEIERDMALDVPMMRLVQGDVGSGKTLVAALAALRAIAHGKQVALMAPTELLAEQHANNFRNWFAPLGIEVGWLAGKQKGKARLAQQEAIASGQVQMIVGTHAIFQEQVQFNGLALVIIDEQHRFGVHQRLALWEKGQQQGFHPHQLIMTATPIPRTLAMTAYADLDTSVIDELPPGRTPVTTVAIPDTRRTDIIDRVHHACITEGRQAYWVCTLIEESELLEAQAAEATWEELKLALPELNVGLVHGRMKPAEKQAVMASFKQGELHLLVATTVIEVGVDVPNASLMIIENPERLGLAQLHQLRGRVGRGAVASHCVLLYKTPLSKTAQIRLQVLRDSNDGFVIAQKDLEIRGPGELLGTRQTGNAEFKVADLLRDQAMIPEVQRLARHIHERYPQQAKALIERWMPETERYSNA.

Residues 48 to 146 (THLYPIGELL…GDLSTPELQE (99 aa)) form a wedge domain region. The 166-residue stretch at 283-448 (DMALDVPMMR…AYADLDTSVI (166 aa)) folds into the Helicase ATP-binding domain. 296–303 (GDVGSGKT) lines the ATP pocket. Residues 397 to 400 (DEQH) carry the DEAH box motif. The 147-residue stretch at 482-628 (EGRQAYWVCT…GFVIAQKDLE (147 aa)) folds into the Helicase C-terminal domain.

Belongs to the helicase family. RecG subfamily. Monomer in solution. Probably a monomer on HJ DNA. Binding to fork DNA is facilitated by SSB; the proteins do not seem to stably associate. Mg(2+) serves as cofactor.

It catalyses the reaction Couples ATP hydrolysis with the unwinding of duplex DNA by translocating in the 3'-5' direction.. The enzyme catalyses ATP + H2O = ADP + phosphate + H(+). Plays a critical role in recombination and DNA repair. Helps process Holliday junction (HJ) intermediates to mature products by catalyzing branch migration. Has replication fork regression activity, unwinds stalled or blocked replication forks to make a HJ that can be resolved by RuvC or RusA. Also rewinds unwound dsDNA in an ATP-dependent manner. Has double-stranded (ds)DNA unwinding activity characteristic of a DNA helicase with 3'-5' polarity in vitro on linear dsDNA; branched duplex DNA (Y-DNA) substrates adopt different conformations that influence which of the two arms are unwound. Binds and unwinds HJ and Y-DNA but not linear duplex DNA; binds no more than 10 nucleotides of ssDNA at a fork. Has a role in constitutive stable DNA replication (cSDR, DNA replication in the absence of protein synthesis) and R-loop (RNA annealed with dsDNA) formation. Unwinds R-loops but not RNA:DNA hybrids. Is genetically synergistic to RadA and RuvABC. The polypeptide is ATP-dependent DNA helicase RecG (Escherichia coli (strain K12)).